The sequence spans 381 residues: Protein palisade (381 aa).

The signal sequence occupies residues 1–25; that stretch reads MMMHSRNRSWTLTLLALGVVLATSA. 6 repeat units span residues 190-199, 200-209, 210-219, 220-229, 230-239, and 247-256. The 6 X 10 AA approximate tandem repeats of P-[AP]-A-P-A-Y-E-[AP]-P-[AT] stretch occupies residues 190 to 256; it reads PAAPAYEAPA…PPAPAYEPPA (67 aa). Disordered stretches follow at residues 236–270 and 309–329; these read EAPTTDYSAPAPPAPAYEPPASSYTQGYSQPAQPS and TPTAPPPPPPPAPVYEAPSQN. The segment covering 311–321 has biased composition (pro residues); sequence TAPPPPPPPAP.

Sulfated by pip; may be involved in embryo dorsal-ventral axis determination. Sulfation by pip may occur on covalently bound glycosaminoglycans. Post-translationally, may undergo both disulfide and non-disulfide cross-linking upon incorporation into the vitelline membrane. In terms of tissue distribution, present in the perivitelline space of stage 10 egg chambers and in the vitelline membrane adjacent to the oocyte in stage 13 and 14 egg chambers (at protein level).

Its subcellular location is the secreted. It is found in the extracellular space. The protein localises to the extracellular matrix. Functionally, minor protein component of the vitelline membrane. Involved in vitelline membrane biogenesis during late stages of oogenesis. Required for efficient disulfide and non-disulfide cross-linking of several vitelline membrane components. This chain is Protein palisade, found in Drosophila melanogaster (Fruit fly).